The sequence spans 385 residues: Homoserine O-succinyltransferase (385 aa).

The region spanning 45–355 is the AB hydrolase-1 domain; it reads NAVLVCHALN…SHGHDAFLLD (311 aa). Serine 151 acts as the Nucleophile in catalysis. Substrate is bound at residue arginine 221. Residues aspartate 316 and histidine 349 contribute to the active site. Substrate is bound at residue aspartate 350.

The protein belongs to the AB hydrolase superfamily. MetX family. As to quaternary structure, homodimer.

It is found in the cytoplasm. The catalysed reaction is L-homoserine + succinyl-CoA = O-succinyl-L-homoserine + CoA. It functions in the pathway amino-acid biosynthesis; L-methionine biosynthesis via de novo pathway; O-succinyl-L-homoserine from L-homoserine: step 1/1. In terms of biological role, transfers a succinyl group from succinyl-CoA to L-homoserine, forming succinyl-L-homoserine. This Herminiimonas arsenicoxydans protein is Homoserine O-succinyltransferase.